A 424-amino-acid chain; its full sequence is PtdIns3K complex I subunit atg38 (424 aa).

Residues 50–78 (LIKRCANNQIEELMVRIRELRESLPNKQT) adopt a coiled-coil conformation. Residues 73 to 212 (LPNKQTPISM…DPAYQNTNEQ (140 aa)) form a required for interaction with atg8 region. The short motif at 178 to 181 (FLIV) is the AIM element. A compositionally biased stretch (basic and acidic residues) spans 268 to 284 (LSEEEMGRSHKREESFK). Residues 268-299 (LSEEEMGRSHKREESFKRAFGHASSSESSIGE) form a disordered region. Positions 390–420 (TVDSQLKIKQLETQIATLQKQLEQFQTSTLD) form a coiled coil.

This sequence belongs to the ATG38 family. As to quaternary structure, component of the autophagy-specific vps34 PI3-kinase complex I composed of vps15, atg6, pik3/vps34, atg14 and atg38. Interacts (via AIM motif) with atg8; the interaction is direct and leads to recruitment of the autophagy-specific vps34 PI3-kinase complex I to the phagophore assembly site.

The protein localises to the preautophagosomal structure membrane. It localises to the cytoplasm. Its subcellular location is the cytosol. Its function is as follows. Functions as a part of the autophagy-specific VPS34 PI3-kinase complex I that plays a role in autophagosome assembly. This complex is essential to recruit the atg8-phosphatidylinositol conjugate and the atg12-atg5 conjugate to the pre-autophagosomal structure. By binding to atg8 at the phagophore assembly site, atg38 helps establish a positive feedback loop for recruitment of phagophore assembly proteins, including atg8. This is PtdIns3K complex I subunit atg38 from Schizosaccharomyces pombe (strain 972 / ATCC 24843) (Fission yeast).